A 222-amino-acid chain; its full sequence is Small ribosomal subunit protein uS3 (222 aa).

The region spanning 38 to 106 (IRKFISEKLA…NVHINIVEIK (69 aa)) is the KH type-2 domain.

The protein belongs to the universal ribosomal protein uS3 family. As to quaternary structure, part of the 30S ribosomal subunit. Forms a tight complex with proteins S10 and S14.

Binds the lower part of the 30S subunit head. Binds mRNA in the 70S ribosome, positioning it for translation. The polypeptide is Small ribosomal subunit protein uS3 (Lactobacillus johnsonii (strain CNCM I-12250 / La1 / NCC 533)).